The chain runs to 453 residues: Phosphoglucosamine mutase (453 aa).

Catalysis depends on S108, which acts as the Phosphoserine intermediate. S108, D247, D249, and D251 together coordinate Mg(2+). Residue S108 is modified to Phosphoserine.

The protein belongs to the phosphohexose mutase family. Mg(2+) serves as cofactor. In terms of processing, activated by phosphorylation.

It carries out the reaction alpha-D-glucosamine 1-phosphate = D-glucosamine 6-phosphate. Functionally, catalyzes the conversion of glucosamine-6-phosphate to glucosamine-1-phosphate. The chain is Phosphoglucosamine mutase from Methylobacillus flagellatus (strain ATCC 51484 / DSM 6875 / VKM B-1610 / KT).